A 93-amino-acid polypeptide reads, in one-letter code: MTKSELIEQLCSKKPQLSAKQVEDTVKEVLEQMATTLEGGDRIEIRGFGSFSLHYREPRLGRNPKTGDKVELDGKFVPHFKPGKELRERVNFS.

The protein belongs to the bacterial histone-like protein family. In terms of assembly, heterodimer of an alpha and a beta chain.

This protein is one of the two subunits of integration host factor, a specific DNA-binding protein that functions in genetic recombination as well as in transcriptional and translational control. The polypeptide is Integration host factor subunit beta (Aliivibrio salmonicida (strain LFI1238) (Vibrio salmonicida (strain LFI1238))).